A 128-amino-acid polypeptide reads, in one-letter code: MPKSVIIPAGSSAPLAPFVPGTLADGVVYVSGTLAFDQHNNVLFADDPKAQTRHVLETIRKVIETAGGTMADVTFNSIFITDWKNYAAINETYAEFFPGDKPARFCIQCGLVKPDALVEIATIAHIAK.

This sequence belongs to the RutC family. In terms of assembly, homotrimer.

The enzyme catalyses (Z)-3-aminoacrylate + H2O + H(+) = 3-oxopropanoate + NH4(+). Functionally, involved in pyrimidine catabolism. Catalyzes the deamination of 3-aminoacrylate to malonic semialdehyde, a reaction that can also occur spontaneously. RutC may facilitate the reaction and modulate the metabolic fitness, rather than catalyzing essential functions. The chain is 3-aminoacrylate deaminase RutC from Escherichia coli O157:H7.